The primary structure comprises 565 residues: Mitochondrial distribution and morphology protein 34 (565 aa).

The region spanning M1 to L195 is the SMP-LTD domain. Disordered stretches follow at residues E207–L236, P296–T317, and S348–P504. A compositionally biased stretch (basic residues) spans R358 to R370. Residues V371–E381 show a composition bias toward basic and acidic residues. Polar residues predominate over residues S382–S401. 2 stretches are compositionally biased toward basic and acidic residues: residues L446 to V472 and I483 to E496.

This sequence belongs to the MDM34 family. In terms of assembly, component of the ER-mitochondria encounter structure (ERMES) or MDM complex, composed of mmm1, mdm10, mdm12 and mdm34.

Its subcellular location is the mitochondrion outer membrane. Its function is as follows. Component of the ERMES/MDM complex, which serves as a molecular tether to connect the endoplasmic reticulum (ER) and mitochondria. Components of this complex are involved in the control of mitochondrial shape and protein biogenesis, and function in nonvesicular lipid trafficking between the ER and mitochondria. Mdm34 is required for the interaction of the ER-resident membrane protein mmm1 and the outer mitochondrial membrane-resident beta-barrel protein mdm10. The chain is Mitochondrial distribution and morphology protein 34 from Aspergillus terreus (strain NIH 2624 / FGSC A1156).